A 396-amino-acid polypeptide reads, in one-letter code: Tryptophan synthase beta chain (396 aa).

Lys86 bears the N6-(pyridoxal phosphate)lysine mark.

Belongs to the TrpB family. Tetramer of two alpha and two beta chains. Pyridoxal 5'-phosphate serves as cofactor.

The enzyme catalyses (1S,2R)-1-C-(indol-3-yl)glycerol 3-phosphate + L-serine = D-glyceraldehyde 3-phosphate + L-tryptophan + H2O. It participates in amino-acid biosynthesis; L-tryptophan biosynthesis; L-tryptophan from chorismate: step 5/5. Its function is as follows. The beta subunit is responsible for the synthesis of L-tryptophan from indole and L-serine. The chain is Tryptophan synthase beta chain from Pectobacterium atrosepticum (strain SCRI 1043 / ATCC BAA-672) (Erwinia carotovora subsp. atroseptica).